We begin with the raw amino-acid sequence, 266 residues long: Glutamate racemase (266 aa).

Substrate-binding positions include 9–10 and 41–42; these read DS and YG. Residue C72 is the Proton donor/acceptor of the active site. Residue 73-74 participates in substrate binding; that stretch reads NT. C183 acts as the Proton donor/acceptor in catalysis. 184–185 lines the substrate pocket; that stretch reads TH.

The protein belongs to the aspartate/glutamate racemases family.

It carries out the reaction L-glutamate = D-glutamate. Its pathway is cell wall biogenesis; peptidoglycan biosynthesis. Its function is as follows. Provides the (R)-glutamate required for cell wall biosynthesis. This Listeria innocua serovar 6a (strain ATCC BAA-680 / CLIP 11262) protein is Glutamate racemase.